We begin with the raw amino-acid sequence, 297 residues long: Calponin-1 (297 aa).

Residues 28–131 (HQREQELREW…STLLALASMA (104 aa)) form the Calponin-homology (CH) domain. 3 Calponin-like repeats span residues 164–189 (IGLQMGTNKFASQQGMTAYGTRRHLY), 204–229 (ISLQMGTNKGASQAGMTAPGTKRQIF), and 243–268 (VSLQMGSNKGASQRGMTVYGLPRQVY). Position 170 is a phosphothreonine; by ROCK2 (threonine 170). Serine 175 carries the phosphoserine; by ROCK2 modification. Residues threonine 180 and threonine 184 each carry the phosphothreonine; by ROCK2 modification. Phosphothreonine; by ROCK2 is present on threonine 259.

This sequence belongs to the calponin family.

Its function is as follows. Thin filament-associated protein that is implicated in the regulation and modulation of smooth muscle contraction. It is capable of binding to actin, calmodulin and tropomyosin. The interaction of calponin with actin inhibits the actomyosin Mg-ATPase activity. This is Calponin-1 (CNN1) from Bos taurus (Bovine).